The chain runs to 149 residues: Probable flagellum biosynthesis repressor protein FlbT (149 aa).

This sequence belongs to the FlbT family.

Functionally, has a post-transcriptional repressor function in flagellum biogenesis. Associates with the 5'-UTR of fljK mRNA and promotes its degradation. In Rhizobium etli (strain ATCC 51251 / DSM 11541 / JCM 21823 / NBRC 15573 / CFN 42), this protein is Probable flagellum biosynthesis repressor protein FlbT.